The chain runs to 483 residues: Alginate biosynthesis protein AlgA (483 aa).

The protein belongs to the mannose-6-phosphate isomerase type 2 family. Monomer. Co(2+) serves as cofactor.

The catalysed reaction is D-mannose 6-phosphate = D-fructose 6-phosphate. It carries out the reaction alpha-D-mannose 1-phosphate + GTP + H(+) = GDP-alpha-D-mannose + diphosphate. Its pathway is nucleotide-sugar biosynthesis; GDP-alpha-D-mannose biosynthesis; GDP-alpha-D-mannose from alpha-D-mannose 1-phosphate (GTP route): step 1/1. The protein operates within nucleotide-sugar biosynthesis; GDP-alpha-D-mannose biosynthesis; alpha-D-mannose 1-phosphate from D-fructose 6-phosphate: step 1/2. Functionally, produces a precursor for alginate polymerization. The alginate layer provides a protective barrier against host immune defenses and antibiotics. This is Alginate biosynthesis protein AlgA (algA) from Pseudomonas fluorescens.